A 414-amino-acid polypeptide reads, in one-letter code: F-box protein At3g47030 (414 aa).

A disordered region spans residues Met1–Arg24. The 50-residue stretch at Ile28–Met77 folds into the F-box domain.

The protein is F-box protein At3g47030 of Arabidopsis thaliana (Mouse-ear cress).